The chain runs to 353 residues: Photosystem II protein D1 (353 aa).

Position 2 is an N-acetylthreonine (Thr-2). Thr-2 bears the Phosphothreonine mark. 3 consecutive transmembrane segments (helical) span residues 29–46 (YIGWFGVLMIPTLLTATS), 118–133 (HFLLGVACYMGREWEL), and 142–156 (WIAVAYSAPVAAATA). A chlorophyll a-binding site is contributed by His-118. Tyr-126 is a pheophytin a binding site. Asp-170 and Glu-189 together coordinate [CaMn4O5] cluster. The helical transmembrane segment at 197-218 (FHMLGVAGVFGGSLFSAMHGSL) threads the bilayer. Position 198 (His-198) interacts with chlorophyll a. A quinone is bound by residues His-215 and 264-265 (SF). Residue His-215 participates in Fe cation binding. His-272 contributes to the Fe cation binding site. A helical transmembrane segment spans residues 274-288 (FLAAWPVVGIWFTAL). The [CaMn4O5] cluster site is built by His-332, Glu-333, Asp-342, and Ala-344. Residues 345–353 (AVEVPSING) constitute a propeptide that is removed on maturation.

The protein belongs to the reaction center PufL/M/PsbA/D family. In terms of assembly, PSII is composed of 1 copy each of membrane proteins PsbA, PsbB, PsbC, PsbD, PsbE, PsbF, PsbH, PsbI, PsbJ, PsbK, PsbL, PsbM, PsbT, PsbX, PsbY, PsbZ, Psb30/Ycf12, at least 3 peripheral proteins of the oxygen-evolving complex and a large number of cofactors. It forms dimeric complexes. The cofactor is The D1/D2 heterodimer binds P680, chlorophylls that are the primary electron donor of PSII, and subsequent electron acceptors. It shares a non-heme iron and each subunit binds pheophytin, quinone, additional chlorophylls, carotenoids and lipids. D1 provides most of the ligands for the Mn4-Ca-O5 cluster of the oxygen-evolving complex (OEC). There is also a Cl(-1) ion associated with D1 and D2, which is required for oxygen evolution. The PSII complex binds additional chlorophylls, carotenoids and specific lipids.. Post-translationally, tyr-161 forms a radical intermediate that is referred to as redox-active TyrZ, YZ or Y-Z. C-terminally processed by CTPA; processing is essential to allow assembly of the oxygen-evolving complex and thus photosynthetic growth.

It is found in the plastid. The protein localises to the chloroplast thylakoid membrane. It catalyses the reaction 2 a plastoquinone + 4 hnu + 2 H2O = 2 a plastoquinol + O2. Its function is as follows. Photosystem II (PSII) is a light-driven water:plastoquinone oxidoreductase that uses light energy to abstract electrons from H(2)O, generating O(2) and a proton gradient subsequently used for ATP formation. It consists of a core antenna complex that captures photons, and an electron transfer chain that converts photonic excitation into a charge separation. The D1/D2 (PsbA/PsbD) reaction center heterodimer binds P680, the primary electron donor of PSII as well as several subsequent electron acceptors. The polypeptide is Photosystem II protein D1 (Triticum aestivum (Wheat)).